We begin with the raw amino-acid sequence, 193 residues long: Holliday junction branch migration complex subunit RuvA (193 aa).

A domain I region spans residues 1–64; the sequence is MIGRIAGTLL…EDAHLLYGFL (64 aa). The interval 65-139 is domain II; that stretch reads TPQERSTFRE…GKLGADLGPL (75 aa). Positions 139-143 are flexible linker; it reads LAGAA. Residues 144–193 form a domain III region; it reads SPSDHAADILNALLALGYSEKEALAAIKNVPAGTGVSEGIKLSLKALSKA.

The protein belongs to the RuvA family. Homotetramer. Forms an RuvA(8)-RuvB(12)-Holliday junction (HJ) complex. HJ DNA is sandwiched between 2 RuvA tetramers; dsDNA enters through RuvA and exits via RuvB. An RuvB hexamer assembles on each DNA strand where it exits the tetramer. Each RuvB hexamer is contacted by two RuvA subunits (via domain III) on 2 adjacent RuvB subunits; this complex drives branch migration. In the full resolvosome a probable DNA-RuvA(4)-RuvB(12)-RuvC(2) complex forms which resolves the HJ.

Its subcellular location is the cytoplasm. In terms of biological role, the RuvA-RuvB-RuvC complex processes Holliday junction (HJ) DNA during genetic recombination and DNA repair, while the RuvA-RuvB complex plays an important role in the rescue of blocked DNA replication forks via replication fork reversal (RFR). RuvA specifically binds to HJ cruciform DNA, conferring on it an open structure. The RuvB hexamer acts as an ATP-dependent pump, pulling dsDNA into and through the RuvAB complex. HJ branch migration allows RuvC to scan DNA until it finds its consensus sequence, where it cleaves and resolves the cruciform DNA. This chain is Holliday junction branch migration complex subunit RuvA, found in Burkholderia thailandensis (strain ATCC 700388 / DSM 13276 / CCUG 48851 / CIP 106301 / E264).